Consider the following 101-residue polypeptide: Small ribosomal subunit protein uS14 (101 aa).

It belongs to the universal ribosomal protein uS14 family. As to quaternary structure, part of the 30S ribosomal subunit. Contacts proteins S3 and S10.

In terms of biological role, binds 16S rRNA, required for the assembly of 30S particles and may also be responsible for determining the conformation of the 16S rRNA at the A site. This Ehrlichia chaffeensis (strain ATCC CRL-10679 / Arkansas) protein is Small ribosomal subunit protein uS14.